A 249-amino-acid chain; its full sequence is 5'-nucleotidase SurE (249 aa).

Aspartate 8, aspartate 9, serine 39, and asparagine 91 together coordinate a divalent metal cation.

The protein belongs to the SurE nucleotidase family. A divalent metal cation serves as cofactor.

The protein resides in the cytoplasm. The catalysed reaction is a ribonucleoside 5'-phosphate + H2O = a ribonucleoside + phosphate. In terms of biological role, nucleotidase that shows phosphatase activity on nucleoside 5'-monophosphates. The chain is 5'-nucleotidase SurE from Haemophilus influenzae (strain 86-028NP).